The chain runs to 365 residues: Prostaglandin E2 receptor EP3 subtype (365 aa).

Positions 1-22 (MASMWAPEHSAEAHSNLSSTTD) are disordered. Topologically, residues 1–30 (MASMWAPEHSAEAHSNLSSTTDDCGSVSVA) are extracellular. A compositionally biased stretch (polar residues) spans 13–22 (AHSNLSSTTD). Residue Asn16 is glycosylated (N-linked (GlcNAc...) asparagine). The helical transmembrane segment at 31-55 (FPITMMVTGFVGNALAMLLVSRSYR) threads the bilayer. At 56-68 (RRESKRKKSFLLC) the chain is on the cytoplasmic side. The chain crosses the membrane as a helical span at residues 69–89 (IGWLALTDLVGQLLTSPVVIL). Topologically, residues 90–108 (VYLSQRRWEQLDPSGRLCT) are extracellular. Cysteines 107 and 184 form a disulfide. The chain crosses the membrane as a helical span at residues 109–130 (FFGLTMTVFGLSSLLVASAMAV). Residues 131 to 151 (ERALAIRAPHWYASHMKTRAT) are Cytoplasmic-facing. The helical transmembrane segment at 152 to 173 (PVLLGVWLSVLAFALLPVLGVG) threads the bilayer. Topologically, residues 174-203 (RYSVQWPGTWCFISTGPAGNETDPAREPGS) are extracellular. N-linked (GlcNAc...) asparagine glycosylation is present at Asn193. Residues 204-229 (VAFASAFACLGLLALVVTFACNLATI) traverse the membrane as a helical segment. At 230 to 259 (KALVSRCRAKAAVSQSSAQWGRITTETAIQ) the chain is on the cytoplasmic side. Residues 260–283 (LMGIMCVLSVCWSPLLIMMLKMIF) form a helical membrane-spanning segment. The Extracellular portion of the chain corresponds to 284 to 303 (NQMSVEQCKTQMGKEKECNS). A helical membrane pass occupies residues 304-325 (FLIAVRLASLNQILDPWVYLLL). At 326-365 (RKILLRKFCQIRDHTNYASSSTSLPCPGSSALMWSDQLER) the chain is on the cytoplasmic side.

It belongs to the G-protein coupled receptor 1 family. In terms of assembly, interacts (via C-terminus) with MKLN1. Ligand binding is affected by cAMP-dependent phosphorylation in brain membranes. Detected in platelets. Kidney, uterus, and mastocytoma cells, and in a lesser amount in brain, thymus, lung, heart, stomach and spleen.

It localises to the cell membrane. Receptor for prostaglandin E2 (PGE2). Required for normal development of fever in response to pyrinogens, including IL1B, prostaglandin E2 and bacterial lipopolysaccharide (LPS). Required for normal potentiation of platelet aggregation by prostaglandin E2, and thus plays a role in the regulation of blood coagulation. Required for increased HCO3(-) secretion in the duodenum in response to mucosal acidification, and thereby contributes to the protection of the mucosa against acid-induced ulceration. Not required for normal kidney function, normal urine volume and osmolality. Functionally, receptor for prostaglandin E2 (PGE2); ligand binding activates a signaling cascade via G(i) proteins that leads to inhibition of adenylate cyclase. Shows high agonist-independent constitutive inhibition of adenylate cyclase. In terms of biological role, receptor for prostaglandin E2 (PGE2); ligand binding activates a signaling cascade via G(i) proteins that leads to inhibition of adenylate cyclase. Requires much higher ligand concentrations than isoform Alpha for activation. Does not display agonist-independent constitutive inhibition of adenylate cyclase. Its function is as follows. Receptor for prostaglandin E2 (PGE2); ligand binding can activate several distinct signaling cascades, resulting in activation or inhibition of adenylate cyclase. This chain is Prostaglandin E2 receptor EP3 subtype (Ptger3), found in Mus musculus (Mouse).